Here is a 468-residue protein sequence, read N- to C-terminus: Tapasin-related protein (468 aa).

Residues M1–A18 form the signal peptide. The Lumenal portion of the chain corresponds to A19–R405. In terms of domain architecture, Ig-like V-type spans P181–Q297. Disulfide bonds link C212–C283 and C321–C382. N265 carries an N-linked (GlcNAc...) asparagine glycan. An Ig-like C1-type domain is found at P304–G394. The helical transmembrane segment at T406–L426 threads the bilayer. The Cytoplasmic segment spans residues Q427–S468.

In terms of assembly, interacts with peptide-free HLA-A*02-B2M complexes or those loaded with low affinity peptides, likely facilitating peptide exchange onto higher affinity peptides. Interacts with MR1 in a ligand-independent way; this interaction may stabilize MR1 pool and facilitate ligand loading and dissociation.

The protein resides in the cell membrane. Its subcellular location is the endoplasmic reticulum membrane. It localises to the microsome membrane. The protein localises to the golgi apparatus membrane. In terms of biological role, component of the antigen processing and presentation pathway, which binds to MHC class I coupled with beta2-microglobulin/B2M. Association between TAPBPR and MHC class I occurs in the absence of a functional peptide-loading complex (PLC). Expression seems to slow down and down-regulate MHC class I surface expression. The protein is Tapasin-related protein (TAPBPL) of Pongo abelii (Sumatran orangutan).